The following is a 492-amino-acid chain: Citrate synthase, peroxisomal (492 aa).

Residues histidine 307, histidine 346, and aspartate 402 contribute to the active site. The tract at residues 469 to 492 (PAKVRSQDSYSSATTKRYSKVTSH) is disordered. Polar residues predominate over residues 475-484 (QDSYSSATTK).

The protein belongs to the citrate synthase family.

The protein resides in the peroxisome. It carries out the reaction oxaloacetate + acetyl-CoA + H2O = citrate + CoA + H(+). The protein operates within carbohydrate metabolism; tricarboxylic acid cycle; isocitrate from oxaloacetate: step 1/2. Functionally, peroxisomal protein involved in the cellular biosynthesis of citrate, and required primarily for cell growth and modulation of multicellular development. This Dictyostelium discoideum (Social amoeba) protein is Citrate synthase, peroxisomal (cshA).